A 239-amino-acid chain; its full sequence is Tetratricopeptide repeat protein 9B (239 aa).

Disordered stretches follow at residues 1–57 (MQRG…LGAA) and 99–126 (QGAR…SEEQ). A phosphoserine mark is found at serine 7 and serine 27. Residues 16–31 (PEPPPRPPPALSPPGS) show a composition bias toward pro residues. A TPR 1 repeat occupies 65–99 (AVAFKAEGQRCYREKKFREAIGKYHRALLQLKAAQ). Residues 106–116 (LPAPAPGPTSS) show a composition bias toward pro residues. A TPR 2 repeat occupies 171 to 204 (FKATYRAGIAFYHLGDYARALRYLQEARSREPTD).

This sequence belongs to the TTC9 family.

This is Tetratricopeptide repeat protein 9B (TTC9B) from Homo sapiens (Human).